The chain runs to 89 residues: Small ribosomal subunit protein uS15 (89 aa).

This sequence belongs to the universal ribosomal protein uS15 family. Part of the 30S ribosomal subunit. Forms a bridge to the 50S subunit in the 70S ribosome, contacting the 23S rRNA.

In terms of biological role, one of the primary rRNA binding proteins, it binds directly to 16S rRNA where it helps nucleate assembly of the platform of the 30S subunit by binding and bridging several RNA helices of the 16S rRNA. Its function is as follows. Forms an intersubunit bridge (bridge B4) with the 23S rRNA of the 50S subunit in the ribosome. The protein is Small ribosomal subunit protein uS15 of Baumannia cicadellinicola subsp. Homalodisca coagulata.